A 193-amino-acid polypeptide reads, in one-letter code: Surfactant protein C (193 aa).

Positions 1–23 are excised as a propeptide; it reads MDMSSKEVLMESPPDYSAGPRSQ. Residues Cys-28 and Cys-29 are each lipidated (S-palmitoyl cysteine). The propeptide occupies 59-193; that stretch reads HMSQKHTEMV…LCGELPLYYI (135 aa). One can recognise a BRICHOS domain in the interval 94–193; that stretch reads FSIGSTGIVV…LCGELPLYYI (100 aa). Cys-121 and Cys-185 are disulfide-bonded. The tract at residues 147 to 170 is disordered; the sequence is KPSTPTSKLGQEEGHDTGSESDSS.

The protein resides in the secreted. It is found in the extracellular space. The protein localises to the surface film. Functionally, pulmonary surfactant associated proteins promote alveolar stability by lowering the surface tension at the air-liquid interface in the peripheral air spaces. This is Surfactant protein C from Mus musculus (Mouse).